Consider the following 95-residue polypeptide: Putative septation protein SpoVG (95 aa).

It belongs to the SpoVG family.

Could be involved in septation. In Brevibacillus brevis (strain 47 / JCM 6285 / NBRC 100599), this protein is Putative septation protein SpoVG.